Here is a 255-residue protein sequence, read N- to C-terminus: Putative deoxyribonuclease tatdn3-B (255 aa).

Residues histidine 11, histidine 13, glutamate 106, histidine 129, histidine 152, and aspartate 199 each contribute to the Zn(2+) site.

The protein belongs to the metallo-dependent hydrolases superfamily. TatD-type hydrolase family. Mn(2+) serves as cofactor. It depends on Ca(2+) as a cofactor. The cofactor is Mg(2+). Requires Zn(2+) as cofactor.

Its subcellular location is the nucleus. The 3'-exonuclease activity is sensitive to the metal ion present in the active site, whereas the AP endodeoxyribonuclease activity is observed in a variety of divalent metal cofactors. 3'-exoxonuclease activity is suppressed in the presence of Ca(2+), Zn(2+) and Ni(2+). Functionally, exhibits 3'-exonuclease activities and apurinic/apyrimidinic (AP) endonuclease (in vitro). Show preferential AP endonuclease activity on double-stranded DNA substrates and 3'- exonuclease activity on single-stranded DNA. This chain is Putative deoxyribonuclease tatdn3-B (tatdn3-b), found in Xenopus laevis (African clawed frog).